Reading from the N-terminus, the 110-residue chain is Large ribosomal subunit protein uL22 (110 aa).

The protein belongs to the universal ribosomal protein uL22 family. As to quaternary structure, part of the 50S ribosomal subunit.

In terms of biological role, this protein binds specifically to 23S rRNA; its binding is stimulated by other ribosomal proteins, e.g. L4, L17, and L20. It is important during the early stages of 50S assembly. It makes multiple contacts with different domains of the 23S rRNA in the assembled 50S subunit and ribosome. Its function is as follows. The globular domain of the protein is located near the polypeptide exit tunnel on the outside of the subunit, while an extended beta-hairpin is found that lines the wall of the exit tunnel in the center of the 70S ribosome. The polypeptide is Large ribosomal subunit protein uL22 (Bdellovibrio bacteriovorus (strain ATCC 15356 / DSM 50701 / NCIMB 9529 / HD100)).